We begin with the raw amino-acid sequence, 234 residues long: uncharacterized protein (234 aa).

The next 4 membrane-spanning stretches (helical) occupy residues 28–48 (IVII…SIIS), 67–87 (FQIF…FDPI), 123–143 (GGVD…SGTI), and 154–174 (LYCI…GLLY).

This sequence belongs to the complex I subunit 2 family.

The protein resides in the mitochondrion membrane. This is an uncharacterized protein from Neurospora crassa (strain ATCC 24698 / 74-OR23-1A / CBS 708.71 / DSM 1257 / FGSC 987).